We begin with the raw amino-acid sequence, 454 residues long: MSHNDTIVAQATPPGRGGVGILRISGLKARDVAQEVLGKLPKPRYADYLPFKDVDGSALDQGIALWFPGPNSFTGEDVLELQGHGGPVILDLLLKRILTLPGVRIARPGEFSERAFLNDKLDLAQAEAIADLIDASSEQAARSALNSLQGAFSARVNHLVEALTHLRIYVEAAIDFPDEEIDFLSDGKIEAQLNGVIADLDAVRTEARQGSLLREGMKVVIAGRPNAGKSSLLNALAGREAAIVTDIAGTTRDVLREHIHIDGMPLHIIDTAGLRDASDEVERIGIERAWQEIEQADRVLFMVDGTTTDAVDPADIWPDFIARLPKNLPITVVRNKADITGETLGISEVNGHSLVRLSARTGEGIDVLRNHLKQSMGFDTNMEGGFLARRRHLQALAEAAEHLEQGKAQLLGAWAGELLAEELRLAQQSLSEITGEFTSDDLLGRIFSSFCIGK.

Residues R23, E80, and K120 each coordinate (6S)-5-formyl-5,6,7,8-tetrahydrofolate. In terms of domain architecture, TrmE-type G spans 216–377 (GMKVVIAGRP…LRNHLKQSMG (162 aa)). Position 226 (N226) interacts with K(+). GTP contacts are provided by residues 226–231 (NAGKSS), 245–251 (TDIAGTT), 270–273 (DTAG), 335–338 (NKAD), and 358–360 (SAR). Residue S230 coordinates Mg(2+). K(+)-binding residues include T245, I247, and T250. Mg(2+) is bound at residue T251. Residue K454 coordinates (6S)-5-formyl-5,6,7,8-tetrahydrofolate.

The protein belongs to the TRAFAC class TrmE-Era-EngA-EngB-Septin-like GTPase superfamily. TrmE GTPase family. As to quaternary structure, homodimer. Heterotetramer of two MnmE and two MnmG subunits. It depends on K(+) as a cofactor.

It is found in the cytoplasm. Functionally, exhibits a very high intrinsic GTPase hydrolysis rate. Involved in the addition of a carboxymethylaminomethyl (cmnm) group at the wobble position (U34) of certain tRNAs, forming tRNA-cmnm(5)s(2)U34. The sequence is that of tRNA modification GTPase MnmE from Salmonella typhimurium (strain LT2 / SGSC1412 / ATCC 700720).